The chain runs to 63 residues: MSRGNQRDVDRARNLKKSQASKKKQAGDPTKRLEAQAEIMRAKQRAADERKAAEANGGSKGKK.

Over residues 1 to 13 (MSRGNQRDVDRAR) the composition is skewed to basic and acidic residues. The tract at residues 1 to 63 (MSRGNQRDVD…EANGGSKGKK (63 aa)) is disordered. A compositionally biased stretch (basic residues) spans 14 to 24 (NLKKSQASKKK). The span at 25–35 (QAGDPTKRLEA) shows a compositional bias: basic and acidic residues.

It belongs to the SERF family.

It is found in the cytoplasm. The protein localises to the nucleus. It localises to the nucleolus. This chain is SERF-like protein C1705.02, found in Schizosaccharomyces pombe (strain 972 / ATCC 24843) (Fission yeast).